The sequence spans 205 residues: uncharacterized protein (205 aa).

The HTH tetR-type domain occupies Asp11 to Gly71. Residues Thr34–Phe53 constitute a DNA-binding region (H-T-H motif).

This is an uncharacterized protein from Bacillus subtilis (strain 168).